The following is a 177-amino-acid chain: ATP synthase subunit delta (177 aa).

Belongs to the ATPase delta chain family. As to quaternary structure, F-type ATPases have 2 components, F(1) - the catalytic core - and F(0) - the membrane proton channel. F(1) has five subunits: alpha(3), beta(3), gamma(1), delta(1), epsilon(1). F(0) has three main subunits: a(1), b(2) and c(10-14). The alpha and beta chains form an alternating ring which encloses part of the gamma chain. F(1) is attached to F(0) by a central stalk formed by the gamma and epsilon chains, while a peripheral stalk is formed by the delta and b chains.

It is found in the cell inner membrane. In terms of biological role, f(1)F(0) ATP synthase produces ATP from ADP in the presence of a proton or sodium gradient. F-type ATPases consist of two structural domains, F(1) containing the extramembraneous catalytic core and F(0) containing the membrane proton channel, linked together by a central stalk and a peripheral stalk. During catalysis, ATP synthesis in the catalytic domain of F(1) is coupled via a rotary mechanism of the central stalk subunits to proton translocation. This protein is part of the stalk that links CF(0) to CF(1). It either transmits conformational changes from CF(0) to CF(1) or is implicated in proton conduction. This chain is ATP synthase subunit delta, found in Pseudoalteromonas translucida (strain TAC 125).